The following is a 602-amino-acid chain: Elongation factor 4 (602 aa).

The 183-residue stretch at 7–189 (SKIRNFCIIA…AIVRRVPPPQ (183 aa)) folds into the tr-type G domain. GTP-binding positions include 19–24 (DHGKST) and 136–139 (NKVD).

This sequence belongs to the TRAFAC class translation factor GTPase superfamily. Classic translation factor GTPase family. LepA subfamily.

Its subcellular location is the cell inner membrane. It catalyses the reaction GTP + H2O = GDP + phosphate + H(+). Required for accurate and efficient protein synthesis under certain stress conditions. May act as a fidelity factor of the translation reaction, by catalyzing a one-codon backward translocation of tRNAs on improperly translocated ribosomes. Back-translocation proceeds from a post-translocation (POST) complex to a pre-translocation (PRE) complex, thus giving elongation factor G a second chance to translocate the tRNAs correctly. Binds to ribosomes in a GTP-dependent manner. The protein is Elongation factor 4 of Prochlorococcus marinus (strain MIT 9301).